Here is a 372-residue protein sequence, read N- to C-terminus: DNA replication and repair protein RecF (372 aa).

30–37 (GENAQGKT) contributes to the ATP binding site.

It belongs to the RecF family.

It localises to the cytoplasm. In terms of biological role, the RecF protein is involved in DNA metabolism; it is required for DNA replication and normal SOS inducibility. RecF binds preferentially to single-stranded, linear DNA. It also seems to bind ATP. In Shouchella clausii (strain KSM-K16) (Alkalihalobacillus clausii), this protein is DNA replication and repair protein RecF.